Consider the following 647-residue polypeptide: Putative lipase YDL109C (647 aa).

Ser-274 functions as the Charge relay system in the catalytic mechanism. The interval 502-523 is disordered; that stretch reads PPPSPTLYEGTAAKEGETRKTR. A compositionally biased stretch (basic and acidic residues) spans 513–523; that stretch reads AAKEGETRKTR.

The protein belongs to the putative lipase ROG1 family.

In terms of biological role, involved in lipid metabolism. The polypeptide is Putative lipase YDL109C (Saccharomyces cerevisiae (strain ATCC 204508 / S288c) (Baker's yeast)).